Reading from the N-terminus, the 584-residue chain is Pentatricopeptide repeat-containing protein At2g01510, mitochondrial (584 aa).

The transit peptide at 1–20 directs the protein to the mitochondrion; sequence MLAKQTPLTKQMLSELLRAS. PPR repeat units follow at residues 73-107, 108-142, 143-173, 174-208, 209-243, 244-274, 275-309, 310-344, and 348-378; these read RIFL…GVRP, DEFT…GFGC, LGIV…MQVK, DLVA…AVQF, DSFT…EIDC, NIIV…MKQR, NVVS…GLRP, NYVT…NDKN, and RKEH…MPVE. The interval 383 to 458 is type E motif; it reads IWGALLGACA…VAAYSSVEFE (76 aa). A type E(+) motif region spans residues 459 to 489; the sequence is GKIHFFNRGDKSHPQSKAIYEKLDEILKKIR. Positions 490–584 are type DYW motif; sequence KMGYVPDTCS…NGVCSCKEFW (95 aa).

The protein belongs to the PPR family. PCMP-H subfamily.

Its subcellular location is the mitochondrion. The chain is Pentatricopeptide repeat-containing protein At2g01510, mitochondrial (PCMP-H37) from Arabidopsis thaliana (Mouse-ear cress).